The following is a 232-amino-acid chain: Eukaryotic translation initiation factor NCBP (232 aa).

A compositionally biased stretch (basic and acidic residues) spans Met1–Glu11. A disordered region spans residues Met1–Leu49. Positions Val31–Glu41 are enriched in acidic residues.

It belongs to the eukaryotic initiation factor 4E family. In terms of assembly, EIF4F is a multi-subunit complex, the composition of which varies with external and internal environmental conditions. It is composed of at least EIF4A, EIF4E and EIF4G. EIF4E is also known to interact with other partners. In higher plants two isoforms of EIF4F have been identified, named isoform EIF4F and isoform EIF(iso)4F. Isoform EIF4F has subunits p220 and p26, whereas isoform EIF(iso)4F has subunits p82 and p28.

Recognizes and binds the 7-methylguanosine-containing mRNA cap during an early step in the initiation of protein synthesis and facilitates ribosome binding by inducing the unwinding of the mRNAs secondary structures. The protein is Eukaryotic translation initiation factor NCBP (NCBP) of Triticum aestivum (Wheat).